The following is a 423-amino-acid chain: Glucuronoxylanase XynC (423 aa).

The signal sequence occupies residues 1 to 33; the sequence is MMSSVKKTICVLLVCFTMMSVMLLGPGVTEVSA. The active-site Proton donor is the Glu172. Catalysis depends on Glu261, which acts as the Nucleophile.

The protein belongs to the glycosyl hydrolase 30 family.

The protein localises to the secreted. It catalyses the reaction Endohydrolysis of (1-&gt;4)-beta-D-xylosyl links in some glucuronoarabinoxylans.. Its pathway is glycan degradation; xylan degradation. In terms of biological role, catalyzes the depolymerization of methylglucuronoxylan (MeGAXn). It cleaves the beta-1,4-xylosidic bond penultimate to that linking carbon one of the xylose residue substituted with alpha-1,2-linked 4-O-methyl-D-glucuronate (MeGA). The polypeptide is Glucuronoxylanase XynC (xynC) (Bacillus subtilis).